The following is a 630-amino-acid chain: Chaperone protein HtpG (630 aa).

Residues 1–336 (MTTTVEQTAE…TADLPLNVSR (336 aa)) form an a; substrate-binding region. The interval 337 to 551 (EMIQESPILA…EDGYDRQMEK (215 aa)) is b. The interval 552–630 (ILQNAGRLQG…VFERSVRSEG (79 aa)) is c.

This sequence belongs to the heat shock protein 90 family. Homodimer.

It is found in the cytoplasm. Functionally, molecular chaperone. Has ATPase activity. This chain is Chaperone protein HtpG, found in Rhizobium etli (strain ATCC 51251 / DSM 11541 / JCM 21823 / NBRC 15573 / CFN 42).